The chain runs to 729 residues: Replication restart protein PriA (729 aa).

In terms of domain architecture, Helicase ATP-binding spans 209 to 376; it reads QTALGRFRSF…QSGAYRLLQL (168 aa). Residue 222–229 participates in ATP binding; that stretch reads GITGSGKT. The DEAH box signature appears at 319-322; that stretch reads DEEH. C436, C439, C445, C448, C463, C466, C476, and C479 together coordinate Zn(2+). The 153-residue stretch at 471 to 623 folds into the Helicase C-terminal domain; that stretch reads PIPFKCPDCG…YAVFAENELN (153 aa).

This sequence belongs to the helicase family. PriA subfamily. As to quaternary structure, interacts with PriB with high affinity in the absence of DNA. Component of the replication restart primosome. Requires Zn(2+) as cofactor.

The enzyme catalyses Couples ATP hydrolysis with the unwinding of duplex DNA by translocating in the 3'-5' direction.. It catalyses the reaction ATP + H2O = ADP + phosphate + H(+). With respect to regulation, helicase and ATPase activities on forked DNA are stimulated by PriB; E.coli PriB does not stimulate this helicase. PriA:PriB complex-catalyzed duplex DNA winding is inhibited by CGS 15943 (CHEBI:131351). CGS 15943 decreases ATP hydrolysis and decreases PriA's affinity for DNA. In terms of biological role, initiates the restart of stalled replication forks, which reloads the replicative helicase on sites other than the origin of replication. Recognizes and binds to abandoned replication forks and remodels them to uncover a helicase loading site. Promotes assembly of the primosome at these replication forks. Its function is as follows. DNA helicase with greatest unwinding activity on forked DNA substrates with relatively short duplex lagging strand arms. A DNA-dependent ATPase. Required for DNA transformation and DNA repair. Binds single-stranded (ss)DNA and replication fork-like DNA but not double-stranded (ds)DNA. The polypeptide is Replication restart protein PriA (Neisseria gonorrhoeae (strain ATCC 700825 / FA 1090)).